Consider the following 299-residue polypeptide: Probable lipid kinase YegS (299 aa).

The 132-residue stretch at 2 to 133 folds into the DAGKc domain; that stretch reads AEFPASLLIL…IDMAQVNKQT (132 aa). Residues T40, 66–72, and T95 each bind ATP; that span reads GDGTINE. Residues L215, D218, and L220 each coordinate Mg(2+). The Proton acceptor role is filled by E271.

The protein belongs to the diacylglycerol/lipid kinase family. YegS lipid kinase subfamily. It depends on Mg(2+) as a cofactor. Ca(2+) is required as a cofactor.

The protein localises to the cytoplasm. Its function is as follows. Probably phosphorylates lipids; the in vivo substrate is unknown. The chain is Probable lipid kinase YegS from Escherichia coli O6:K15:H31 (strain 536 / UPEC).